The sequence spans 95 residues: Large ribosomal subunit protein uL23 (95 aa).

Belongs to the universal ribosomal protein uL23 family. Part of the 50S ribosomal subunit. Contacts protein L29, and trigger factor when it is bound to the ribosome.

Its function is as follows. One of the early assembly proteins it binds 23S rRNA. One of the proteins that surrounds the polypeptide exit tunnel on the outside of the ribosome. Forms the main docking site for trigger factor binding to the ribosome. This chain is Large ribosomal subunit protein uL23, found in Bacillus licheniformis (strain ATCC 14580 / DSM 13 / JCM 2505 / CCUG 7422 / NBRC 12200 / NCIMB 9375 / NCTC 10341 / NRRL NRS-1264 / Gibson 46).